The primary structure comprises 312 residues: Phosphatidate cytidylyltransferase (312 aa).

The tract at residues 1-31 is disordered; sequence MASTDPGTGTPLDESVPGIKRAMRQSTKNTP. Helical transmembrane passes span 37–57, 58–78, 85–105, 110–130, 157–177, 186–206, 223–243, and 247–267; these read LPAA…TLVF, APRI…HEVV, GYVI…WLTW, VGAL…RLVM, ATVF…LLVY, FCLM…GVLF, GFAG…TFLA, and PWVG…GDLV.

It belongs to the CDS family.

The protein resides in the cell membrane. It catalyses the reaction a 1,2-diacyl-sn-glycero-3-phosphate + CTP + H(+) = a CDP-1,2-diacyl-sn-glycerol + diphosphate. It participates in phospholipid metabolism; CDP-diacylglycerol biosynthesis; CDP-diacylglycerol from sn-glycerol 3-phosphate: step 3/3. In Mycobacterium leprae (strain TN), this protein is Phosphatidate cytidylyltransferase (cdsA).